A 763-amino-acid chain; its full sequence is Phosphoglycerol transferase I (763 aa).

4 helical membrane-spanning segments follow: residues 1–21 (MSEL…AWKA), 26–46 (WWFA…ITLF), 77–97 (ILPG…LGWI), and 108–128 (FGYS…SPAF).

The protein belongs to the OpgB family.

Its subcellular location is the cell inner membrane. It catalyses the reaction a phosphatidylglycerol + a membrane-derived-oligosaccharide D-glucose = a 1,2-diacyl-sn-glycerol + a membrane-derived-oligosaccharide 6-(glycerophospho)-D-glucose.. It functions in the pathway glycan metabolism; osmoregulated periplasmic glucan (OPG) biosynthesis. In terms of biological role, transfers a phosphoglycerol residue from phosphatidylglycerol to the membrane-bound nascent glucan backbones. The sequence is that of Phosphoglycerol transferase I from Escherichia coli O45:K1 (strain S88 / ExPEC).